Reading from the N-terminus, the 403-residue chain is Argininosuccinate synthase (403 aa).

8-16 serves as a coordination point for ATP; the sequence is AYSGGLDTS. Position 87 (Tyr87) interacts with L-citrulline. Gly117 provides a ligand contact to ATP. 3 residues coordinate L-aspartate: Thr119, Asn123, and Asp124. Residue Asn123 coordinates L-citrulline. L-citrulline-binding residues include Arg127, Ser175, Glu259, and Tyr271.

The protein belongs to the argininosuccinate synthase family. Type 1 subfamily. As to quaternary structure, homotetramer.

The protein localises to the cytoplasm. The catalysed reaction is L-citrulline + L-aspartate + ATP = 2-(N(omega)-L-arginino)succinate + AMP + diphosphate + H(+). Its pathway is amino-acid biosynthesis; L-arginine biosynthesis; L-arginine from L-ornithine and carbamoyl phosphate: step 2/3. The protein is Argininosuccinate synthase of Salinispora arenicola (strain CNS-205).